We begin with the raw amino-acid sequence, 568 residues long: Small ribosomal subunit protein bS1 (568 aa).

S1 motif domains are found at residues Gly27–Glu93, Gly111–Arg177, Gly198–Lys266, Gly283–Lys353, Gly370–Lys440, and Asn459–Lys530.

The protein belongs to the bacterial ribosomal protein bS1 family.

Binds mRNA; thus facilitating recognition of the initiation point. It is needed to translate mRNA with a short Shine-Dalgarno (SD) purine-rich sequence. This Rhizobium meliloti (strain 1021) (Ensifer meliloti) protein is Small ribosomal subunit protein bS1 (rpsA).